We begin with the raw amino-acid sequence, 32 residues long: Dermaseptin-L1 (32 aa).

Expressed by the skin glands.

The protein resides in the secreted. Antimicrobial peptide active against the Gram-negative bacterium E.coli (MIC=8 uM) but inactive against the Gram-positive bacterium S.aureus. Also inhibits growth of zoospores of the chytrid fungus B.dendrobatidis at high concentrations (above 25 uM). Shows anticancer activities since it is cytolytic against HepG2 human hepatoma-derived cells (LC(50)=45 uM). Is only weakly hemolytic on human erythrocytes. This chain is Dermaseptin-L1, found in Agalychnis lemur (Lemur leaf frog).